Here is a 119-residue protein sequence, read N- to C-terminus: Large ribosomal subunit protein bL20 (119 aa).

The protein belongs to the bacterial ribosomal protein bL20 family.

Binds directly to 23S ribosomal RNA and is necessary for the in vitro assembly process of the 50S ribosomal subunit. It is not involved in the protein synthesizing functions of that subunit. The polypeptide is Large ribosomal subunit protein bL20 (Stenotrophomonas maltophilia (strain R551-3)).